Reading from the N-terminus, the 369-residue chain is 3-dehydroquinate synthase (369 aa).

NAD(+) contacts are provided by residues 75–80 (DGEEHK), 109–113 (GVIGD), 133–134 (TT), lysine 146, lysine 155, and 173–176 (TLKT). Glutamate 188, histidine 251, and histidine 268 together coordinate Zn(2+).

It belongs to the sugar phosphate cyclases superfamily. Dehydroquinate synthase family. Co(2+) serves as cofactor. It depends on Zn(2+) as a cofactor. The cofactor is NAD(+).

The protein resides in the cytoplasm. The enzyme catalyses 7-phospho-2-dehydro-3-deoxy-D-arabino-heptonate = 3-dehydroquinate + phosphate. It participates in metabolic intermediate biosynthesis; chorismate biosynthesis; chorismate from D-erythrose 4-phosphate and phosphoenolpyruvate: step 2/7. Functionally, catalyzes the conversion of 3-deoxy-D-arabino-heptulosonate 7-phosphate (DAHP) to dehydroquinate (DHQ). This Legionella pneumophila subsp. pneumophila (strain Philadelphia 1 / ATCC 33152 / DSM 7513) protein is 3-dehydroquinate synthase.